A 491-amino-acid polypeptide reads, in one-letter code: Pentatricopeptide repeat-containing protein At5g27460 (491 aa).

10 PPR repeats span residues 69 to 99, 105 to 139, 142 to 176, 177 to 211, 212 to 246, 248 to 278, 283 to 313, 318 to 348, 353 to 387, and 388 to 426; these read SLSE…MENQ, SVYD…SVSM, AKSA…GFLV, TPHP…KIPR, NVLS…KSVE, GWSS…AEKM, NRLG…SKSV, SCVN…WEAQ, DVRV…GGTP, and NYKT…HWRP.

The protein belongs to the PPR family. P subfamily.

The polypeptide is Pentatricopeptide repeat-containing protein At5g27460 (Arabidopsis thaliana (Mouse-ear cress)).